The sequence spans 64 residues: MNEDQNRAVALLLAELWQGDTRDIPRPAAYDPPVLCAGCGRELRPDVLRQQPMANYCHWCRGAE.

The protein resides in the host cytoplasm. This is an uncharacterized protein from Enterobacteriaceae (Bacteriophage Mu).